The following is a 178-amino-acid chain: Endothelin-2 (178 aa).

The first 24 residues, M1–G24, serve as a signal peptide directing secretion. The propeptide occupies Q25–P46. 2 cysteine pairs are disulfide-bonded: C49–C63 and C51–C59. The propeptide occupies V70 to T178. Residues C96 to H111 form an endothelin-like region. The tract at residues A158–T178 is disordered. The segment covering Q160–R169 has biased composition (basic and acidic residues).

Belongs to the endothelin/sarafotoxin family.

It localises to the secreted. Endothelins are endothelium-derived vasoconstrictor peptides. In Mustela putorius furo (European domestic ferret), this protein is Endothelin-2 (EDN2).